The primary structure comprises 644 residues: Exoribonuclease 2 (644 aa).

In terms of domain architecture, RNB spans 190-516 (REDLTALDFI…INHRLLKALI (327 aa)). The S1 motif domain occupies 562–644 (DSRFAAEIID…ENRSVIARPV (83 aa)).

It belongs to the RNR ribonuclease family. RNase II subfamily.

The protein localises to the cytoplasm. The enzyme catalyses Exonucleolytic cleavage in the 3'- to 5'-direction to yield nucleoside 5'-phosphates.. In terms of biological role, involved in mRNA degradation. Hydrolyzes single-stranded polyribonucleotides processively in the 3' to 5' direction. In Sodalis glossinidius (strain morsitans), this protein is Exoribonuclease 2.